Consider the following 236-residue polypeptide: Uridylate kinase (236 aa).

An ATP-binding site is contributed by 10 to 11 (GS). Gly44 contacts UMP. Gly45 and Arg49 together coordinate ATP. UMP contacts are provided by residues Asp66 and 114-120 (ITPGQTT). Positions 140, 146, and 149 each coordinate ATP.

The protein belongs to the UMP kinase family. Homohexamer.

Its subcellular location is the cytoplasm. It catalyses the reaction UMP + ATP = UDP + ADP. The protein operates within pyrimidine metabolism; CTP biosynthesis via de novo pathway; UDP from UMP (UMPK route): step 1/1. Its activity is regulated as follows. Inhibited by UTP. In terms of biological role, catalyzes the reversible phosphorylation of UMP to UDP. The protein is Uridylate kinase of Methanospirillum hungatei JF-1 (strain ATCC 27890 / DSM 864 / NBRC 100397 / JF-1).